The primary structure comprises 31 residues: GVIPCGESCVFIPCISSVIGCSCKNKVCYRN.

The cyclopeptide (Gly-Asn) cross-link spans 1 to 31; the sequence is GVIPCGESCVFIPCISSVIGCSCKNKVCYRN. Disulfide bonds link cysteine 5–cysteine 21, cysteine 9–cysteine 23, and cysteine 14–cysteine 28.

Post-translationally, this is a cyclic peptide. Expressed in fruit, pedicel, root and stem but not in leaf (at protein level).

Probably participates in a plant defense mechanism. This is Chassatide C6 from Chassalia chartacea (Chassalia curviflora).